The following is a 223-amino-acid chain: Protein-L-isoaspartate O-methyltransferase (223 aa).

Residue S70 is part of the active site.

The protein belongs to the methyltransferase superfamily. L-isoaspartyl/D-aspartyl protein methyltransferase family.

The protein resides in the cytoplasm. It catalyses the reaction [protein]-L-isoaspartate + S-adenosyl-L-methionine = [protein]-L-isoaspartate alpha-methyl ester + S-adenosyl-L-homocysteine. Its function is as follows. Catalyzes the methyl esterification of L-isoaspartyl residues in peptides and proteins that result from spontaneous decomposition of normal L-aspartyl and L-asparaginyl residues. It plays a role in the repair and/or degradation of damaged proteins. The protein is Protein-L-isoaspartate O-methyltransferase of Methylobacillus flagellatus (strain ATCC 51484 / DSM 6875 / VKM B-1610 / KT).